Consider the following 754-residue polypeptide: Ubiquitin carboxyl-terminal hydrolase 9 (754 aa).

Residues 1 to 14 show a composition bias toward basic residues; the sequence is MIKRWLSVNRKKSH. The disordered stretch occupies residues 1–76; that stretch reads MIKRWLSVNR…SKFSSQTDNL (76 aa). The segment covering 42–58 has biased composition (low complexity); the sequence is SIAKSPSAKSSTSSIPS. The region spanning 134–667 is the USP domain; it reads FGYENFGNTC…TAYVLFYKET (534 aa). The active-site Nucleophile is the cysteine 143. The segment covering 194-209 has biased composition (polar residues); the sequence is ETSTNSGNSNTGYQSN. The disordered stretch occupies residues 194–273; that stretch reads ETSTNSGNSN…DNNEMERPQP (80 aa). The segment covering 222–233 has biased composition (low complexity); sequence QSDQDNSSSSTQ. Over residues 250-272 the composition is skewed to basic and acidic residues; sequence GKDKSNYKDSAKKDDNNEMERPQ. Histidine 618 serves as the catalytic Proton acceptor. A disordered region spans residues 726–754; sequence VKTAETKTPLNDKKRNKQKRKSRILSFIK. Basic and acidic residues predominate over residues 727–738; sequence KTAETKTPLNDK. The span at 739 to 748 shows a compositional bias: basic residues; the sequence is KRNKQKRKSR.

The protein belongs to the peptidase C19 family.

It catalyses the reaction Thiol-dependent hydrolysis of ester, thioester, amide, peptide and isopeptide bonds formed by the C-terminal Gly of ubiquitin (a 76-residue protein attached to proteins as an intracellular targeting signal).. The sequence is that of Ubiquitin carboxyl-terminal hydrolase 9 (UBP9) from Saccharomyces cerevisiae (strain ATCC 204508 / S288c) (Baker's yeast).